The sequence spans 591 residues: Guanylate-binding protein 2 (591 aa).

Residues 1–309 (MAPEINLPGP…NAISSGDLPC (309 aa)) form a GTPase domain (Globular) region. The 242-residue stretch at 35 to 276 (TQPVVVVAIV…FCSYILSHSN (242 aa)) folds into the GB1/RHD3-type G domain. GTP-binding positions include 45–52 (GLYRTGKS), 181–182 (RD), and leucine 245. Cysteine 588 carries the cysteine methyl ester modification. Residue cysteine 588 is the site of S-geranylgeranyl cysteine attachment. Residues 589–591 (NIL) constitute a propeptide, removed in mature form.

This sequence belongs to the TRAFAC class dynamin-like GTPase superfamily. GB1/RHD3 GTPase family. GB1 subfamily. Homodimer; homodimerization occurs upon GTP-binding and is required for the association with membranous structures. Heterodimer with other family members, including GBP1, GBP3, GBP4 and GBP5. Post-translationally, (Microbial infection) Ubiquitinated by S.flexneri IpaH9.8, leading to its degradation by the proteasome, thereby preventing its ability to promote host defense against bacterial infection. Isoprenylation is required for proper subcellular location.

It localises to the cytoplasmic vesicle membrane. The protein localises to the golgi apparatus membrane. The protein resides in the cytoplasm. Its subcellular location is the perinuclear region. The catalysed reaction is GTP + H2O = GDP + phosphate + H(+). Its function is as follows. Interferon (IFN)-inducible GTPase that plays important roles in innate immunity against a diverse range of bacterial, viral and protozoan pathogens. Hydrolyzes GTP to GMP in 2 consecutive cleavage reactions, but the major reaction product is GDP. Following infection, recruited to the pathogen-containing vacuoles or vacuole-escaped bacteria and acts as a positive regulator of inflammasome assembly by promoting the release of inflammasome ligands from bacteria. Acts by promoting lysis of pathogen-containing vacuoles, releasing pathogens into the cytosol. Following pathogen release in the cytosol, promotes recruitment of proteins that mediate bacterial cytolysis: this liberates ligands that are detected by inflammasomes, such as lipopolysaccharide (LPS) that activates the non-canonical CASP4/CASP11 inflammasome or double-stranded DNA (dsDNA) that activates the AIM2 inflammasome. Confers protection to the protozoan pathogen Toxoplasma gondii. Independently of its GTPase activity, acts as an inhibitor of various viruses infectivity, such as HIV-1, Zika and influenza A viruses, by inhibiting FURIN-mediated maturation of viral envelope proteins. The sequence is that of Guanylate-binding protein 2 from Homo sapiens (Human).